The primary structure comprises 314 residues: DNA-directed RNA polymerase subunit alpha (314 aa).

The tract at residues 1 to 228 (MIEIEKPKIE…EHLSIFVNLT (228 aa)) is alpha N-terminal domain (alpha-NTD). The interval 245–314 (KEKVLEMTIE…DLGLSLRNEN (70 aa)) is alpha C-terminal domain (alpha-CTD).

This sequence belongs to the RNA polymerase alpha chain family. Homodimer. The RNAP catalytic core consists of 2 alpha, 1 beta, 1 beta' and 1 omega subunit. When a sigma factor is associated with the core the holoenzyme is formed, which can initiate transcription.

It catalyses the reaction RNA(n) + a ribonucleoside 5'-triphosphate = RNA(n+1) + diphosphate. In terms of biological role, DNA-dependent RNA polymerase catalyzes the transcription of DNA into RNA using the four ribonucleoside triphosphates as substrates. This Listeria innocua serovar 6a (strain ATCC BAA-680 / CLIP 11262) protein is DNA-directed RNA polymerase subunit alpha.